Here is a 958-residue protein sequence, read N- to C-terminus: N-terminal acetyltransferase B complex subunit NAA25 homolog (958 aa).

3 TPR repeats span residues 7-42, 78-111, and 320-353; these read AVLE…HPNT, ELTL…DPSE, and FFAY…MLEY.

The protein belongs to the MDM20/NAA25 family. Component of the N-terminal acetyltransferase B (NatB) complex. Interacts with acer-1. In terms of tissue distribution, expressed in germline and somatic cells.

The protein localises to the cytoplasm. It localises to the nucleus. Its subcellular location is the chromosome. Functionally, non-catalytic subunit of the NatB complex which catalyzes acetylation of the N-terminal methionine residues of proteins beginning with Met-Asp or Met-Glu. Required for chromosome organization and arrangement; specifically for assembly of the central region components of the synaptonemal complex onto chromosomes during meiosis and for DNA double stranded break formation and repair. Acts downstream of xnd-1 to regulate levels of histone acetylation in germ and somatic cell nuclei by controlling acetyl-CoA production through antagonizing the acetyl-CoA hydrolase activity of acer-1. The protein is N-terminal acetyltransferase B complex subunit NAA25 homolog of Caenorhabditis elegans.